Consider the following 330-residue polypeptide: Short chain dehydrogenase yanD (330 aa).

The NADP(+) site is built by Lys-57, Asp-86, Asn-113, Tyr-204, and Lys-208. Tyr-204 functions as the Proton donor in the catalytic mechanism. The Lowers pKa of active site Tyr role is filled by Lys-208.

This sequence belongs to the short-chain dehydrogenases/reductases (SDR) family.

It participates in secondary metabolite biosynthesis; terpenoid biosynthesis. Its function is as follows. Short chain dehydrogenase; part of the gene cluster that mediates the biosynthesis of yanuthone D, a fungal isoprenoid epoxycyclohexenone that acts as an antibiotic against fungi and bacteria. The first step of the pathway is the synthesis of 6-methylsalicylic acid (6-MSA) by the polyketide synthase yanA. 6-MSA is then converted to m-cresol by the decarboxylase yanB. The cytochrome P450 monooxygenase yanC then catalyzes the oxidation of m-cresol to toluquinol. Epoxidation of toluquinol is then performed by the short chain dehydrogenase yanD, with the help of yanE, and a further prenylation by yanG leads to 7-deacetoxyyanuthone A. The next step is the hydroxylation of C-22 of 7-deacetoxyyanuthone A by the cytochrome P450 monooxygenase yanH to yield 22-deacetylyanuthone A. O-Mevalon transferase yanI then attaches mevalon to the hydroxyl group of 22-deacetylyanuthone A to produce yanuthone E. Finally, the FAD-dependent monooxygenase yanF oxidizes the hydroxyl group at C15 of yanuthone E to form yanuthone D. Furthermore, several branching points in the pathway lead to the production of yanuthones F and G from 7-deacetoxyyanuthone A; yanuthones H and I from 22-deacetylyanuthone A; and yanuthone J from yanuthone E. YanD is also involved in the synthesis of yanuthone X1 which does not have 6-methylsalicylic acid (6-MSA) as precursor. In Aspergillus niger (strain ATCC 1015 / CBS 113.46 / FGSC A1144 / LSHB Ac4 / NCTC 3858a / NRRL 328 / USDA 3528.7), this protein is Short chain dehydrogenase yanD.